The sequence spans 753 residues: Polyribonucleotide nucleotidyltransferase (753 aa).

Residues Asp-543 and Asp-549 each coordinate Mg(2+). Positions Pro-609 to Ile-668 constitute a KH domain. Positions Gly-680–Val-749 constitute an S1 motif domain.

Belongs to the polyribonucleotide nucleotidyltransferase family. Mg(2+) is required as a cofactor.

The protein localises to the cytoplasm. The catalysed reaction is RNA(n+1) + phosphate = RNA(n) + a ribonucleoside 5'-diphosphate. Involved in mRNA degradation. Catalyzes the phosphorolysis of single-stranded polyribonucleotides processively in the 3'- to 5'-direction. The chain is Polyribonucleotide nucleotidyltransferase from Corynebacterium glutamicum (strain ATCC 13032 / DSM 20300 / JCM 1318 / BCRC 11384 / CCUG 27702 / LMG 3730 / NBRC 12168 / NCIMB 10025 / NRRL B-2784 / 534).